The following is a 295-amino-acid chain: MDQKQIEEIVRSVMASMGQTAPAPSEAKCTTTTCAAPVTSESCALDLGSAEAKAWIGVENPHRADVLTELRRSTVARVCTGRAGPRPRTQALLRFLADHSRSKDTVLKEVPEEWVKAQGLLEVRSEISDKNLYLTRPDMGRRLCAEAVEALKAQCVANPDVQVVISDGLSTDAITVNYEEILPPLMAGLKQAGLKVGTPFFVRYGRVKIEDQIGEILGAKVVILLVGERPGLGQSESLSCYAVYSPRMATTVEADRTCISNIHQGGTPPVEAAAVIVDLAKRMLEQKASGINMTR.

Adenosylcob(III)alamin is bound by residues valine 207, glutamate 228, and cysteine 258.

This sequence belongs to the EutC family. In terms of assembly, the basic unit is a heterodimer which dimerizes to form tetramers. The heterotetramers trimerize; 6 large subunits form a core ring with 6 small subunits projecting outwards. Requires adenosylcob(III)alamin as cofactor.

It is found in the bacterial microcompartment. The catalysed reaction is ethanolamine = acetaldehyde + NH4(+). The protein operates within amine and polyamine degradation; ethanolamine degradation. Its function is as follows. Catalyzes the deamination of various vicinal amino-alcohols to oxo compounds. Allows this organism to utilize ethanolamine as the sole source of nitrogen and carbon in the presence of external vitamin B12. The protein is Ethanolamine ammonia-lyase small subunit of Escherichia coli O139:H28 (strain E24377A / ETEC).